Here is a 140-residue protein sequence, read N- to C-terminus: ATP synthase epsilon chain (140 aa).

The protein belongs to the ATPase epsilon chain family. In terms of assembly, F-type ATPases have 2 components, CF(1) - the catalytic core - and CF(0) - the membrane proton channel. CF(1) has five subunits: alpha(3), beta(3), gamma(1), delta(1), epsilon(1). CF(0) has three main subunits: a, b and c.

Its subcellular location is the cell inner membrane. Produces ATP from ADP in the presence of a proton gradient across the membrane. This is ATP synthase epsilon chain from Legionella pneumophila (strain Paris).